Here is a 194-residue protein sequence, read N- to C-terminus: dCTP deaminase (194 aa).

Residues 110 to 115 (RSSLAR), Asp-128, 136 to 138 (VLE), Tyr-171, Lys-178, and Gln-182 contribute to the dCTP site. Residue Glu-138 is the Proton donor/acceptor of the active site.

Belongs to the dCTP deaminase family. Homotrimer.

The enzyme catalyses dCTP + H2O + H(+) = dUTP + NH4(+). The protein operates within pyrimidine metabolism; dUMP biosynthesis; dUMP from dCTP (dUTP route): step 1/2. Its function is as follows. Catalyzes the deamination of dCTP to dUTP. In Histophilus somni (strain 2336) (Haemophilus somnus), this protein is dCTP deaminase.